Consider the following 295-residue polypeptide: Pyridoxal 5'-phosphate synthase subunit PdxS (295 aa).

D25 is a D-ribose 5-phosphate binding site. The active-site Schiff-base intermediate with D-ribose 5-phosphate is the K82. Residue G154 coordinates D-ribose 5-phosphate. R166 provides a ligand contact to D-glyceraldehyde 3-phosphate. D-ribose 5-phosphate contacts are provided by residues G215 and 236–237 (GS).

It belongs to the PdxS/SNZ family. In the presence of PdxT, forms a dodecamer of heterodimers.

It carries out the reaction aldehydo-D-ribose 5-phosphate + D-glyceraldehyde 3-phosphate + L-glutamine = pyridoxal 5'-phosphate + L-glutamate + phosphate + 3 H2O + H(+). It functions in the pathway cofactor biosynthesis; pyridoxal 5'-phosphate biosynthesis. Catalyzes the formation of pyridoxal 5'-phosphate from ribose 5-phosphate (RBP), glyceraldehyde 3-phosphate (G3P) and ammonia. The ammonia is provided by the PdxT subunit. Can also use ribulose 5-phosphate and dihydroxyacetone phosphate as substrates, resulting from enzyme-catalyzed isomerization of RBP and G3P, respectively. The chain is Pyridoxal 5'-phosphate synthase subunit PdxS from Staphylococcus haemolyticus (strain JCSC1435).